The primary structure comprises 37 residues: Photosystem II reaction center protein Psb30 (37 aa).

Residues 10–30 (LISLLLLTLIMLAGPAVIALW) traverse the membrane as a helical segment.

The protein belongs to the Psb30/Ycf12 family. PSII is composed of 1 copy each of membrane proteins PsbA, PsbB, PsbC, PsbD, PsbE, PsbF, PsbH, PsbI, PsbJ, PsbK, PsbL, PsbM, PsbT, PsbX, Psb30/Ycf12, peripheral proteins PsbO, CyanoQ (PsbQ), PsbU, PsbV and a large number of cofactors. It forms dimeric complexes.

It localises to the cell inner membrane. In terms of biological role, a core subunit of photosystem II (PSII), probably helps stabilize the reaction center. This chain is Photosystem II reaction center protein Psb30, found in Gloeobacter violaceus (strain ATCC 29082 / PCC 7421).